We begin with the raw amino-acid sequence, 331 residues long: Syntaxin-43 (331 aa).

The Cytoplasmic segment spans residues 1-305 (MATRNRTLLF…KAERTQRQGG (305 aa)). Disordered stretches follow at residues 20–45 (VRAP…KSGL) and 59–80 (PNRS…GTIT). Residues 31-40 (TLTEHNSLTG) are compositionally biased toward polar residues. The stretch at 124 to 154 (KEDQHQIETLTQEVTFLLKKSEKQLQRLSAA) forms a coiled coil. Residues 235-297 (EEISIEREKE…DDGLKQLQKA (63 aa)) form the t-SNARE coiled-coil homology domain. The helical; Anchor for type IV membrane protein transmembrane segment at 306-326 (MVMCASVLVILCFIMLVLLIL) threads the bilayer. The Vesicular portion of the chain corresponds to 327–331 (KEILL).

Belongs to the syntaxin family. As to quaternary structure, part of the t-SNARE complex. In terms of tissue distribution, expressed at low levels in roots, stems, flowers and leaves.

The protein localises to the golgi apparatus. It is found in the trans-Golgi network membrane. Its function is as follows. Contributes to the regulation of secretory and vacuolar transport pathways in the post-Golgi network, and to the maintenance of the Golgi apparatus and trans-Golgi network (TGN) morphologies. Vesicle trafficking protein that functions in the secretory pathway and mediates liposome fusion. Required for extracellular resistance responses to a fungal pathogen. Also involved in the protection of chloroplasts from salicylic acid-dependent biotic stress. In Arabidopsis thaliana (Mouse-ear cress), this protein is Syntaxin-43.